The chain runs to 694 residues: N,N-dimethylglycine/sarcosine dehydrogenase (694 aa).

This sequence in the N-terminal section; belongs to the NADH:flavin oxidoreductase/NADH oxidase family. Monomer. The purified enzyme exists in the form of a monomer, dimer or polymer under non-denaturing conditions, but only the monomeric protein exhibits enzyme activity. It depends on FAD as a cofactor. The cofactor is NAD(+). NADP(+) is required as a cofactor.

The protein localises to the cytoplasm. It carries out the reaction oxidized 2[4Fe-4S]-[ferredoxin] + N,N-dimethylglycine + H2O = reduced 2[4Fe-4S]-[ferredoxin] + sarcosine + formaldehyde + 2 H(+). The enzyme catalyses oxidized 2[4Fe-4S]-[ferredoxin] + sarcosine + H2O = reduced 2[4Fe-4S]-[ferredoxin] + formaldehyde + glycine + 2 H(+). Ca(2+) increases the activity by 12%, while the other metal ions tested have no or slightly inhibitory effects. The chelating agent EDTA inhibits the activity by 33%. Its function is as follows. Involved in degradation of glycine betaine. Catalyzes the demethylation of both N,N-dimethylglycine (DMG) and sarcosine, releasing formaldehyde and forming glycine as the final product. Does not show activity toward trimethylamine (TMA), histamine, glycine betaine (GB) or choline. The C-N bond in DMG is probably oxidized by removal of a hydride equivalent to form a labile imine intermediate, which is then spontaneously hydrolyzed in the presence of water, producing sarcosine and formaldehyde. The two protons subtracted from DMG are transferred to the non-covalently bound FAD, resulting in the reduced form of FAD, which is subsequently reoxidized by coupling with reduction of the enzyme-bound NAD(P)(+). Regeneration of NAD(P)(+) is achieved by electron transfer to the [4Fe-4S] cluster in the probable membrane-anchored ferredoxin csal_0991. This chain is N,N-dimethylglycine/sarcosine dehydrogenase, found in Chromohalobacter salexigens (strain ATCC BAA-138 / DSM 3043 / CIP 106854 / NCIMB 13768 / 1H11).